The following is a 298-amino-acid chain: Glycine--tRNA ligase alpha subunit (298 aa).

It belongs to the class-II aminoacyl-tRNA synthetase family. Tetramer of two alpha and two beta subunits.

It is found in the cytoplasm. It carries out the reaction tRNA(Gly) + glycine + ATP = glycyl-tRNA(Gly) + AMP + diphosphate. The protein is Glycine--tRNA ligase alpha subunit of Gloeothece citriformis (strain PCC 7424) (Cyanothece sp. (strain PCC 7424)).